We begin with the raw amino-acid sequence, 98 residues long: uncharacterized protein (98 aa).

This is an uncharacterized protein from Enterobacteria phage T4 (Bacteriophage T4).